Here is a 312-residue protein sequence, read N- to C-terminus: tRNA-dihydrouridine(16) synthase (312 aa).

FMN-binding positions include 7 to 9 (PME) and glutamine 68. The Proton donor role is filled by cysteine 98. FMN contacts are provided by residues lysine 139, 200-202 (NGE), and 224-225 (GR).

This sequence belongs to the Dus family. DusC subfamily. FMN is required as a cofactor.

The enzyme catalyses 5,6-dihydrouridine(16) in tRNA + NADP(+) = uridine(16) in tRNA + NADPH + H(+). It catalyses the reaction 5,6-dihydrouridine(16) in tRNA + NAD(+) = uridine(16) in tRNA + NADH + H(+). Its function is as follows. Catalyzes the synthesis of 5,6-dihydrouridine (D), a modified base found in the D-loop of most tRNAs, via the reduction of the C5-C6 double bond in target uridines. Specifically modifies U16 in tRNAs. The sequence is that of tRNA-dihydrouridine(16) synthase from Salmonella typhimurium (strain LT2 / SGSC1412 / ATCC 700720).